Here is a 518-residue protein sequence, read N- to C-terminus: Lycopene epsilon cyclase, chloroplastic (518 aa).

An NAD(+)-binding site is contributed by 100 to 128; sequence LIVIGCGPAGMSLAAEAGKRGLSVGLIGP. 2 consecutive transmembrane segments (helical) span residues 435 to 455 and 469 to 489; these read FFLF…RIFF and FLGS…MFAI.

Belongs to the lycopene cyclase family. Expressed in leaves and roots. Detected in flower buds and lips.

The protein resides in the plastid. Its subcellular location is the chloroplast membrane. The enzyme catalyses a carotenoid psi-end group = a carotenoid epsilon-end group. It functions in the pathway carotenoid biosynthesis; alpha-zeacarotene biosynthesis. Its pathway is carotenoid biosynthesis; delta-carotene biosynthesis. Functionally, catalyzes the single epsilon-cyclization reaction which converts lycopene to delta-carotene and neurosporene to alpha-zeacarotene. Required for lutein biosynthesis. In Oncidium hybrid cultivar (Orchid), this protein is Lycopene epsilon cyclase, chloroplastic.